The chain runs to 318 residues: L-lactate dehydrogenase (318 aa).

Residues V18, D39, K44, Y69, and 83–84 (GA) each bind NAD(+). 2 residues coordinate substrate: Q86 and R92. Residues S105, 122-124 (VSN), and S147 each bind NAD(+). 124-127 (NPVD) is a binding site for substrate. 152–155 (DTSR) is a substrate binding site. The Proton acceptor role is filled by H179. Position 225 is a phosphotyrosine (Y225). T234 contributes to the substrate binding site.

It belongs to the LDH/MDH superfamily. LDH family. As to quaternary structure, homotetramer.

The protein localises to the cytoplasm. The enzyme catalyses (S)-lactate + NAD(+) = pyruvate + NADH + H(+). Its pathway is fermentation; pyruvate fermentation to lactate; (S)-lactate from pyruvate: step 1/1. In terms of biological role, catalyzes the conversion of lactate to pyruvate. This chain is L-lactate dehydrogenase, found in Clostridium botulinum (strain Langeland / NCTC 10281 / Type F).